The following is a 380-amino-acid chain: Homoserine O-acetyltransferase (380 aa).

Residues 59–363 form the AB hydrolase-1 domain; the sequence is NVVMVLHALT…IYGHDGFLVE (305 aa). The Nucleophile role is filled by S164. R234 contacts substrate. Catalysis depends on residues D327 and H357. D358 serves as a coordination point for substrate.

It belongs to the AB hydrolase superfamily. MetX family. In terms of assembly, homodimer.

It is found in the cytoplasm. It catalyses the reaction L-homoserine + acetyl-CoA = O-acetyl-L-homoserine + CoA. It functions in the pathway amino-acid biosynthesis; L-methionine biosynthesis via de novo pathway; O-acetyl-L-homoserine from L-homoserine: step 1/1. In terms of biological role, transfers an acetyl group from acetyl-CoA to L-homoserine, forming acetyl-L-homoserine. The sequence is that of Homoserine O-acetyltransferase from Mycolicibacterium smegmatis (strain ATCC 700084 / mc(2)155) (Mycobacterium smegmatis).